We begin with the raw amino-acid sequence, 108 residues long: Large ribosomal subunit protein P2A (108 aa).

A disordered region spans residues 62 to 108; it reads LSSVPSGAPAAAAGGASAAAGGEATEEAAEEEAAEESDDDMSFGLFD. Residues 68–84 are compositionally biased toward low complexity; sequence GAPAAAAGGASAAAGGE. Positions 85 to 102 are enriched in acidic residues; it reads ATEEAAEEEAAEESDDDM. Serine 98 is modified (phosphoserine).

Belongs to the eukaryotic ribosomal protein P1/P2 family.

Plays an important role in the elongation step of protein synthesis. The chain is Large ribosomal subunit protein P2A (RPP2A) from Candida albicans (Yeast).